Here is a 305-residue protein sequence, read N- to C-terminus: Transcription factor bHLH18 (305 aa).

Residues Leu41–Ser67 form a disordered region. Positions Thr44–Ser56 are enriched in polar residues. In terms of domain architecture, bHLH spans Ser122–Leu171. Positions Asp201 to Pro224 are disordered. Over residues Ser207 to Asn222 the composition is skewed to low complexity.

As to quaternary structure, homodimer. In terms of tissue distribution, expressed in roots.

Its subcellular location is the nucleus. The sequence is that of Transcription factor bHLH18 (BHLH18) from Arabidopsis thaliana (Mouse-ear cress).